A 129-amino-acid polypeptide reads, in one-letter code: Glyoxalase domain-containing protein 5 homolog (129 aa).

Residues 5–128 (RLDHLVLTVS…DYNLIEISNY (124 aa)) enclose the VOC domain.

This sequence belongs to the glyoxalase I family.

The chain is Glyoxalase domain-containing protein 5 homolog (glod5) from Dictyostelium discoideum (Social amoeba).